The sequence spans 475 residues: MVPQTETKTGAGFKAGVKDYRLTYYTPDYVVSETDILAAFRMTPQPGVPPEECDAAVAAESSTGTWTTVWTDGLTSLDKYKGRCYDLEPVPGEENQYIAYVAYPIDLFEEGSVTNLFTSIVGNVFGFKALRALRLEDLRISPAYVKTFVGPPHGIQVERDKLNKYGRGLLGCTIKPKLGLSAKNYGRAVYECLRGGLDFTKDDENVNSQPFMRWRDRFLFVAEAIYKSQAETGEIKGHYLNATAGTAEGMLQRAQCAKELGVPIIMHDYLTGGFTANTSLAHYCRDHGLLLHIHRAMHAVIDRQRNHGIHFRVLAKTLRMSGGDHLHSGTVVGKLEGEREVTLGFVDLMRDNFVEKDRSRGIYFTQDWCSMPGVMPVASGGIHVWHMPALVEIFGDDACLQFGGGTLGHPWGNAPGAVANRVALEACTQARNEGRDLAREGGNVIRSACKWSPELAAACEVWKEIKFEFDTIDKL.

Residues Met1–Val2 constitute a propeptide that is removed on maturation. Pro3 is modified (N-acetylproline). Lys14 is modified (N6,N6,N6-trimethyllysine). Asn123 and Thr173 together coordinate substrate. Residue Lys175 is the Proton acceptor of the active site. Residue Lys177 participates in substrate binding. Positions 201, 203, and 204 each coordinate Mg(2+). An N6-carboxylysine modification is found at Lys201. His294 (proton acceptor) is an active-site residue. The substrate site is built by Arg295, His327, and Ser379.

This sequence belongs to the RuBisCO large chain family. Type I subfamily. Heterohexadecamer of 8 large chains and 8 small chains. Requires Mg(2+) as cofactor.

Its subcellular location is the plastid. The protein localises to the chloroplast. The catalysed reaction is 2 (2R)-3-phosphoglycerate + 2 H(+) = D-ribulose 1,5-bisphosphate + CO2 + H2O. It catalyses the reaction D-ribulose 1,5-bisphosphate + O2 = 2-phosphoglycolate + (2R)-3-phosphoglycerate + 2 H(+). Its function is as follows. RuBisCO catalyzes two reactions: the carboxylation of D-ribulose 1,5-bisphosphate, the primary event in carbon dioxide fixation, as well as the oxidative fragmentation of the pentose substrate in the photorespiration process. Both reactions occur simultaneously and in competition at the same active site. This is Ribulose bisphosphate carboxylase large chain from Dunaliella tertiolecta (Green alga).